The following is a 23-amino-acid chain: CKCPSCNFNDVTENCKCCIFRQP.

Pro-4 carries the post-translational modification 4-hydroxyproline; partial. Position 23 is a 4-hydroxyproline; partial; alternate (Pro-23). Residue Pro-23 is modified to Proline amide; alternate.

The name as25b given in PubMed:23474143 corresponds to the hydroxylated peptide. The amidation of the C-terminus of this hydroxylated peptide is not directly confirmed. In terms of processing, contains 3 disulfide bonds. As to expression, expressed by the venom duct.

The protein localises to the secreted. Upon intracranial injection in mice, as25a (the toxin without the two 4-hydroxyprolines) provokes paralysis of the hind limbs and death with a dose of 240 pmol. In Conus cancellatus (Cancellate cone), this protein is Conotoxin as25a.